The chain runs to 206 residues: Ras-related protein Rab7 (206 aa).

GTP is bound by residues 15–22 (GDSGVGKT), 63–67 (DTAGQ), and 125–128 (NKVD). 2 S-geranylgeranyl cysteine lipidation sites follow: Cys-205 and Cys-206.

It belongs to the small GTPase superfamily. Rab family.

The protein localises to the cell membrane. In terms of biological role, protein transport. Probably involved in vesicular traffic. The protein is Ras-related protein Rab7 of Cenchrus ciliaris (Buffelgrass).